The chain runs to 949 residues: Protocadherin alpha-11 (949 aa).

An N-terminal signal peptide occupies residues 1-29; it reads MFGFQRRGLGTPRLQLWLLLLEFWEVGSG. 6 Cadherin domains span residues 30 to 133, 157 to 242, 243 to 349, 350 to 454, 455 to 564, and 580 to 677; these read QLHY…PPVF, ASDA…DPEF, DKSE…SPEV, AVTS…APAF, AQPE…APAL, and VPRS…APKA. The Extracellular segment spans residues 30–696; that stretch reads QLHYSVSEEA…SPEAALVDVN (667 aa). N-linked (GlcNAc...) asparagine glycosylation is found at Asn-265 and Asn-304. Asn-547 carries N-linked (GlcNAc...) asparagine glycosylation. A helical transmembrane segment spans residues 697–717; sequence VYLIIAICVVSSLLVLTLLLY. Topologically, residues 718 to 949 are cytoplasmic; the sequence is TALWWSATPT…GNSTTDNSDQ (232 aa). PXXP repeat units lie at residues 733–736 and 773–776; these read PGKP and PSLP. Positions 733–893 are 6 X 4 AA repeats of P-X-X-P; it reads PGKPTLVCSR…PDKFIIPGSP (161 aa). Disordered regions lie at residues 753–807 and 826–949; these read RRQR…DWRY and ILRA…NSDQ. A compositionally biased stretch (basic and acidic residues) spans 780 to 789; sequence NKEEEGERQE. 4 PXXP repeats span residues 795–798, 831–834, 872–875, and 890–893; these read PGQP, PGGP, PGNP, and PGSP. Residues 908–922 show a composition bias toward basic and acidic residues; that stretch reads DKSDFITFGKKEETK.

Its subcellular location is the cell membrane. Potential calcium-dependent cell-adhesion protein. May be involved in the establishment and maintenance of specific neuronal connections in the brain. This Homo sapiens (Human) protein is Protocadherin alpha-11 (PCDHA11).